A 145-amino-acid chain; its full sequence is LIRP (145 aa).

A signal peptide (or 22) is located at residues 1 to 19; that stretch reads MWKLCLRLLAVLAVCLSTA. 2 consecutive propeptides follow at residues 20–33 and 117–122; these read TQAQ…SPKR and FRRRTR. 3 disulfide bridges follow: Cys-44–Cys-129, Cys-56–Cys-142, and Cys-128–Cys-133.

Belongs to the insulin family. As to quaternary structure, heterodimer of a B chain and an A chain linked by two disulfide bonds.

The protein localises to the secreted. The sequence is that of LIRP from Locusta migratoria (Migratory locust).